The following is an 872-amino-acid chain: MKQLSSAQVRQMWLDFWATKGHSVEPSVSLVPVNDPTLLWINSGVATLKKYFDGTIIPENPRITNAQKAIRTNDIENVGKTARHHTMFEMLGNFSIGDYFRDEAITWAYELLTSPEWFDFPAEKLYMTYYPDDKDSYNRWIEVGVDPSHLIPIEDNFWEIGAGPSGPDTEIFFDRGEAFDPENIGLRLLAEDIENDRYIEIWNIVLSQFNADPAVPRSEYKELPHKNIDTGAGLERLVAVIQGAKTNFETDLFMPIIREVEKLSGKVYDQDGDNMSFKVIADHIRSLSFAIGDGALPGNEGRGYVLRRLLRRASMHGQKLGINEPFLYKLVPTVGKIMESYYPEVLEKRDFIEKIVKSEEESFARTLHSGQHFAQGIVADLKEKGQSVIAGQDVFKLYDTYGFPVELTEEIAEEAGMTVDREGFEAAMKEQQERARASAVKGGSMGMQNETLQNITVESVFNHNASQLSSKLVAIVADNAEVEAVSEGTTSLIFAETPFYAEMGGQVADHGQILDESGKVVATVTNVQKAPNGQALHTVEVLAPLALNQEYTLAIDSNRRHRVMKNHTATHLLHAALHNILGNHATQAGSLNEVEFLRFDFTHFQAVTAEELRAIEQQVNEKIWEALEVKTVETDIDTAKEMGAMALFGEKYGKEVRVVTIGDYSIELCGGTHVGNTSEIGLFKIVKEEGIGSGTRRILAVTGKEAFEAYREQEDALKAVAATLKAPQVKEVPHKVEGLQEQLRQLQKENAELKEKAAAAAAGDIFKDVKEVNGHRYIASQVSVSDAGALRTFADNWKQKDYSDLLVLVAAIGDKVNVLVASKTKDLHAGNLVKELAPIIDGRGGGKPDMAMAGGSNQPKIQELLDAVAGKL.

Zn(2+) is bound by residues His567, His571, Cys669, and His673.

The protein belongs to the class-II aminoacyl-tRNA synthetase family. Zn(2+) serves as cofactor.

It localises to the cytoplasm. The enzyme catalyses tRNA(Ala) + L-alanine + ATP = L-alanyl-tRNA(Ala) + AMP + diphosphate. In terms of biological role, catalyzes the attachment of alanine to tRNA(Ala) in a two-step reaction: alanine is first activated by ATP to form Ala-AMP and then transferred to the acceptor end of tRNA(Ala). Also edits incorrectly charged Ser-tRNA(Ala) and Gly-tRNA(Ala) via its editing domain. The polypeptide is Alanine--tRNA ligase (Streptococcus pneumoniae (strain Hungary19A-6)).